We begin with the raw amino-acid sequence, 188 residues long: F-box only protein 36 (188 aa).

The F-box domain maps to 91-137; that stretch reads FDFLERLSDDLLLNIISYLDLEDIARLCQTSHRFAKLCMSDKLWEQI.

As to quaternary structure, directly interacts with SKP1 and CUL1.

Functionally, substrate-recognition component of the SCF (SKP1-CUL1-F-box protein)-type E3 ubiquitin ligase complex. This chain is F-box only protein 36 (FBXO36), found in Pongo abelii (Sumatran orangutan).